The sequence spans 389 residues: MDPNDAFSAAHPFRWDLGPPAPAPVPPPPPPPPPPPPANVPRELEELVAGYGVRMSTVARISELGFTASTLLAMTERELDDMMAALAGLFRWDLLLGERFGLRAALRAERGRLMSLGGRHHGHQSGSTVDGASQEVLSDEHDMAGSGGMGDDDNGRRMVTGKKQAKKGSAARKGKKARRKKVDDLRLDMQEDEMDCCDEDGGGGSESTESSAGGGGGERQREHPFVVTEPGEVARAKKNGLDYLFHLYEQCRLFLLQVQSMAKLHGHKSPTKVTNQVFRYAKKVGASYINKPKMRHYVHCYALHCLDEEASDALRRAYKARGENVGAWRQACYAPLVDISARHGFDIDAVFAAHPRLAIWYVPTRLRQLCHQARSSHAAAAAALPPPLF.

Disordered regions lie at residues 1–41 and 140–226; these read MDPN…ANVP and EHDM…HPFV. Pro residues predominate over residues 19-39; the sequence is PPAPAPVPPPPPPPPPPPPAN. Residues 159–180 show a composition bias toward basic residues; that stretch reads VTGKKQAKKGSAARKGKKARRK. The Nuclear localization signal signature appears at 161–168; the sequence is GKKQAKKG. Residues 190–201 show a composition bias toward acidic residues; it reads QEDEMDCCDEDG. 3 DNA-binding regions span residues 221-225, 290-297, and 361-364; these read REHPF, NKPKMRHY, and YVPT.

The protein belongs to the FLO/LFY family. Interacts with APO1. In terms of tissue distribution, in very young panicle but not in mature florets, mature leaves, roots or apical meristems.

It localises to the nucleus. Probable transcription factor. Together with APO1, involved in the temporal regulation of meristem size and identity during both vegetative and reproductive developments through interaction with APO1. Promotes flowering. The sequence is that of Probable transcription factor FL from Oryza sativa subsp. japonica (Rice).